We begin with the raw amino-acid sequence, 96 residues long: Aspartyl/glutamyl-tRNA(Asn/Gln) amidotransferase subunit C (96 aa).

The segment at 64–96 (REDEPEPGLPREEVLKNAPDQQDGQFRVPAILE) is disordered.

This sequence belongs to the GatC family. As to quaternary structure, heterotrimer of A, B and C subunits.

The enzyme catalyses L-glutamyl-tRNA(Gln) + L-glutamine + ATP + H2O = L-glutaminyl-tRNA(Gln) + L-glutamate + ADP + phosphate + H(+). The catalysed reaction is L-aspartyl-tRNA(Asn) + L-glutamine + ATP + H2O = L-asparaginyl-tRNA(Asn) + L-glutamate + ADP + phosphate + 2 H(+). In terms of biological role, allows the formation of correctly charged Asn-tRNA(Asn) or Gln-tRNA(Gln) through the transamidation of misacylated Asp-tRNA(Asn) or Glu-tRNA(Gln) in organisms which lack either or both of asparaginyl-tRNA or glutaminyl-tRNA synthetases. The reaction takes place in the presence of glutamine and ATP through an activated phospho-Asp-tRNA(Asn) or phospho-Glu-tRNA(Gln). This chain is Aspartyl/glutamyl-tRNA(Asn/Gln) amidotransferase subunit C, found in Geobacillus thermodenitrificans (strain NG80-2).